A 134-amino-acid polypeptide reads, in one-letter code: ATP synthase epsilon chain (134 aa).

It belongs to the ATPase epsilon chain family. In terms of assembly, F-type ATPases have 2 components, CF(1) - the catalytic core - and CF(0) - the membrane proton channel. CF(1) has five subunits: alpha(3), beta(3), gamma(1), delta(1), epsilon(1). CF(0) has three main subunits: a, b and c.

The protein resides in the cellular thylakoid membrane. Produces ATP from ADP in the presence of a proton gradient across the membrane. The protein is ATP synthase epsilon chain of Prochlorococcus marinus (strain MIT 9215).